The primary structure comprises 352 residues: Ion-translocating oxidoreductase complex subunit D (352 aa).

Transmembrane regions (helical) follow at residues 20 to 40, 44 to 64, 78 to 109, and 123 to 143; these read IMLLVLIAALPGVAAQTWFFG, LFQIVLAAVTALFAEAIVLSL, ALLTGLLLAVSIPPLAPWWMIVLGTGFAIIIA, and PAMIGYVVLLISFPVQMTSWL. At Thr-187 the chain carries FMN phosphoryl threonine. The next 5 helical transmembrane spans lie at 214-234, 242-262, 267-287, 301-321, and 322-342; these read VLAGVGWQWVNLAWLVGGVFL, WHIPVSFLVTLALCATLGWLF, LASPQLHLLSGATMLGAFFIL, LIFGALAGVLVWLIRSFGGYP, and DGVAFAVLLANITVPLIDYYT.

This sequence belongs to the NqrB/RnfD family. The complex is composed of six subunits: RsxA, RsxB, RsxC, RsxD, RsxE and RsxG. FMN serves as cofactor.

The protein resides in the cell inner membrane. Its function is as follows. Part of a membrane-bound complex that couples electron transfer with translocation of ions across the membrane. Required to maintain the reduced state of SoxR. This Salmonella arizonae (strain ATCC BAA-731 / CDC346-86 / RSK2980) protein is Ion-translocating oxidoreductase complex subunit D.